Here is a 702-residue protein sequence, read N- to C-terminus: Cadmium, zinc and cobalt-transporting ATPase (702 aa).

The Cytoplasmic segment spans residues 1–86 (MRLVKQEYVL…HIKKSADDGY (86 aa)). In terms of domain architecture, HMA spans 4 to 72 (VKQEYVLDGL…KVKSIDPHVT (69 aa)). Residues Cys15 and Cys18 each contribute to the Cd(2+) site. Co(2+)-binding residues include Cys15 and Cys18. Zn(2+) is bound by residues Cys15 and Cys18. Residues 87–107 (RNRMVNMLIRMAAAVILGAAA) form a helical membrane-spanning segment. The Extracellular segment spans residues 108-116 (YLVQSGTIE). A helical membrane pass occupies residues 117-136 (FFLFLGAYLIIGGDIIIRAV). The Cytoplasmic portion of the chain corresponds to 137-143 (KNIIRGQ). A helical membrane pass occupies residues 144–163 (VFDEHFLMALATIGAFLIQQ). Over 164–166 (YPE) the chain is Extracellular. The chain crosses the membrane as a helical span at residues 167–186 (GVAVMLFYQIGELFQGAAVS). Over 187 to 320 (RSRKSISALM…ITKFAKYYTP (134 aa)) the chain is Cytoplasmic. Residues 321–339 (AVVIIAVLLAFVPPLVLSG) traverse the membrane as a helical segment. The Extracellular segment spans residues 340–345 (AALSDW). The chain crosses the membrane as a helical span at residues 346 to 363 (VYRALIFLVISCPCALVV). The Cytoplasmic segment spans residues 364 to 648 (SIPLGFFGGI…AIRIAKRTRR (285 aa)). Asp401 acts as the 4-aspartylphosphate intermediate in catalysis. Positions 595 and 599 each coordinate Mg(2+). Residues 649–670 (IVWQNIGFALGVKAIFLILGAF) form a helical membrane-spanning segment. The Extracellular segment spans residues 671-678 (GIATMWEA). Residues 679 to 694 (VFSDVGVTLLAVANAM) form a helical membrane-spanning segment. Over 695–702 (RVMRLKNK) the chain is Cytoplasmic.

It belongs to the cation transport ATPase (P-type) (TC 3.A.3) family. Type IB subfamily.

The protein localises to the cell membrane. The enzyme catalyses Zn(2+)(in) + ATP + H2O = Zn(2+)(out) + ADP + phosphate + H(+). It carries out the reaction Cd(2+)(in) + ATP + H2O = Cd(2+)(out) + ADP + phosphate + H(+). Functionally, couples the hydrolysis of ATP with the transport of cadmium, zinc and cobalt out of the cell. Does not seem to transport copper. This is Cadmium, zinc and cobalt-transporting ATPase (cadA) from Bacillus subtilis (strain 168).